The sequence spans 842 residues: Valine--tRNA ligase (842 aa).

A 'HIGH' region motif is present at residues 86–96 (PFTSGELHMGH). Positions 572–576 (RMSKS) match the 'KMSKS' region motif. Lysine 575 contributes to the ATP binding site.

This sequence belongs to the class-I aminoacyl-tRNA synthetase family. ValS type 2 subfamily.

The protein resides in the cytoplasm. It carries out the reaction tRNA(Val) + L-valine + ATP = L-valyl-tRNA(Val) + AMP + diphosphate. Its function is as follows. Catalyzes the attachment of valine to tRNA(Val). As ValRS can inadvertently accommodate and process structurally similar amino acids such as threonine, to avoid such errors, it has a 'posttransfer' editing activity that hydrolyzes mischarged Thr-tRNA(Val) in a tRNA-dependent manner. This is Valine--tRNA ligase from Saccharolobus solfataricus (strain ATCC 35092 / DSM 1617 / JCM 11322 / P2) (Sulfolobus solfataricus).